The sequence spans 270 residues: Phosphonoacetaldehyde hydrolase (270 aa).

The active-site Nucleophile is the Asp11. Mg(2+) contacts are provided by Asp11 and Ala13. Catalysis depends on Lys53, which acts as the Schiff-base intermediate with substrate. Asp187 is a binding site for Mg(2+).

It belongs to the HAD-like hydrolase superfamily. PhnX family. As to quaternary structure, homodimer. Requires Mg(2+) as cofactor.

The enzyme catalyses phosphonoacetaldehyde + H2O = acetaldehyde + phosphate + H(+). In terms of biological role, involved in phosphonate degradation. The sequence is that of Phosphonoacetaldehyde hydrolase from Salmonella paratyphi C (strain RKS4594).